A 689-amino-acid chain; its full sequence is Beta-galactosidase Pbg (689 aa).

Arg118 contacts substrate. A Zn(2+)-binding site is contributed by Cys122. Position 156 (Asn156) interacts with substrate. Catalysis depends on Glu157, which acts as the Proton donor. Zn(2+) is bound by residues Cys162, Cys164, and Cys167. Residue Glu318 is the Nucleophile of the active site. Residues Trp326 and 366–369 (EKFH) contribute to the substrate site.

This sequence belongs to the glycosyl hydrolase 42 family.

The enzyme catalyses Hydrolysis of terminal non-reducing beta-D-galactose residues in beta-D-galactosides.. This chain is Beta-galactosidase Pbg, found in Clostridium perfringens (strain ATCC 13124 / DSM 756 / JCM 1290 / NCIMB 6125 / NCTC 8237 / Type A).